We begin with the raw amino-acid sequence, 111 residues long: Protein RnfH (111 aa).

The segment at 88–111 is disordered; sequence RRRRVQKTRESGTREGQKWLRGGA. The segment covering 94-105 has biased composition (basic and acidic residues); that stretch reads KTRESGTREGQK.

This sequence belongs to the UPF0125 (RnfH) family.

In Cupriavidus pinatubonensis (strain JMP 134 / LMG 1197) (Cupriavidus necator (strain JMP 134)), this protein is Protein RnfH.